We begin with the raw amino-acid sequence, 109 residues long: Cell division protein ZapA (109 aa).

A coiled-coil region spans residues 21–99; that stretch reads PEQRDALNQA…IEQALLEQGR (79 aa).

It belongs to the ZapA family. Type 1 subfamily. Homodimer. Interacts with FtsZ.

The protein resides in the cytoplasm. Its function is as follows. Activator of cell division through the inhibition of FtsZ GTPase activity, therefore promoting FtsZ assembly into bundles of protofilaments necessary for the formation of the division Z ring. It is recruited early at mid-cell but it is not essential for cell division. The protein is Cell division protein ZapA of Cronobacter sakazakii (strain ATCC BAA-894) (Enterobacter sakazakii).